Here is a 386-residue protein sequence, read N- to C-terminus: 2-deoxy-scyllo-inosose synthase (386 aa).

Residues D42, 73-76 (EVHK), 105-109 (GITGN), 129-130 (TT), 140-142 (SLK), and 151-152 (KN) contribute to the NAD(+) site. K142 is an active-site residue. E184 is a Co(2+) binding site. E244 is a catalytic residue. Co(2+)-binding residues include H247 and H263.

Belongs to the sugar phosphate cyclases superfamily. DOI synthase family. Requires NAD(+) as cofactor. It depends on Co(2+) as a cofactor.

It carries out the reaction D-glucose 6-phosphate = 2-deoxy-L-scyllo-inosose + phosphate. The protein operates within metabolic intermediate biosynthesis; 2-deoxystreptamine biosynthesis; 2-deoxystreptamine from D-glucose 6-phosphate: step 1/4. Its pathway is antibiotic biosynthesis; paromomycin biosynthesis. In terms of biological role, catalyzes the intramolecular carbocycle formation from D-glucose-6-phosphate to 2-deoxy-scyllo-inosose (DOI). The polypeptide is 2-deoxy-scyllo-inosose synthase (parC) (Streptomyces paromomycinus (Streptomyces rimosus subsp. paromomycinus)).